We begin with the raw amino-acid sequence, 95 residues long: uncharacterized protein (95 aa).

In terms of domain architecture, ABM spans Val2–Phe92.

This is an uncharacterized protein from Bacillus subtilis (strain 168).